A 266-amino-acid chain; its full sequence is Succinate dehydrogenase [ubiquinone] iron-sulfur subunit, mitochondrial (266 aa).

The transit peptide at 1–20 (MLNVLLRRKAFCLVTKKGMA) directs the protein to the mitochondrion. The 2Fe-2S ferredoxin-type domain maps to 36–127 (FKVYRWNPDE…QLKIYPLPHM (92 aa)). Positions 87, 92, 95, and 107 each coordinate [2Fe-2S] cluster. The region spanning 169–199 (DRKKLDGLYECILCACCSTSCPSYWWNQEQY) is the 4Fe-4S ferredoxin-type domain. Residues Cys-179, Cys-182, and Cys-185 each contribute to the [4Fe-4S] cluster site. A [3Fe-4S] cluster-binding site is contributed by Cys-189. Trp-194 provides a ligand contact to a ubiquinone. Residues Cys-236 and Cys-242 each coordinate [3Fe-4S] cluster. Cys-246 provides a ligand contact to [4Fe-4S] cluster.

Belongs to the succinate dehydrogenase/fumarate reductase iron-sulfur protein family. In terms of assembly, component of complex II composed of four subunits: a flavoprotein (FP), an iron-sulfur protein (IP), and a cytochrome b composed of a large and a small subunit. [2Fe-2S] cluster serves as cofactor. [3Fe-4S] cluster is required as a cofactor. It depends on [4Fe-4S] cluster as a cofactor.

The protein resides in the mitochondrion inner membrane. It carries out the reaction a quinone + succinate = fumarate + a quinol. It participates in carbohydrate metabolism; tricarboxylic acid cycle; fumarate from succinate (eukaryal route): step 1/1. In terms of biological role, subunit of succinate dehydrogenase (SDH) that is involved in complex II of the mitochondrial electron transport chain and is responsible for transferring electrons from succinate to ubiquinone (coenzyme Q). SDH1 and SDH2 form the catalytic dimer. Electrons flow from succinate to the FAD bound to SDH1, and sequentially through the iron-sulfur clusters bound to SDH2 and enter the membrane dimer formed by SDH3 and SDH4. This is Succinate dehydrogenase [ubiquinone] iron-sulfur subunit, mitochondrial (SDH2) from Saccharomyces cerevisiae (strain ATCC 204508 / S288c) (Baker's yeast).